A 241-amino-acid polypeptide reads, in one-letter code: DNA repair protein RecO (241 aa).

Belongs to the RecO family.

Its function is as follows. Involved in DNA repair and RecF pathway recombination. The protein is DNA repair protein RecO of Rickettsia canadensis (strain McKiel).